Here is a 123-residue protein sequence, read N- to C-terminus: S-adenosylmethionine decarboxylase proenzyme 2 (123 aa).

Ser-65 serves as the catalytic Schiff-base intermediate with substrate; via pyruvic acid. Ser-65 is modified (pyruvic acid (Ser); by autocatalysis). His-70 acts as the Proton acceptor; for processing activity in catalysis. The active-site Proton donor; for catalytic activity is Cys-85.

Belongs to the prokaryotic AdoMetDC family. Type 1 subfamily. In terms of assembly, heterotetramer of two alpha and two beta chains arranged as a dimer of alpha/beta heterodimers. It depends on pyruvate as a cofactor. Post-translationally, is synthesized initially as an inactive proenzyme. Formation of the active enzyme involves a self-maturation process in which the active site pyruvoyl group is generated from an internal serine residue via an autocatalytic post-translational modification. Two non-identical subunits are generated from the proenzyme in this reaction, and the pyruvate is formed at the N-terminus of the alpha chain, which is derived from the carboxyl end of the proenzyme. The post-translation cleavage follows an unusual pathway, termed non-hydrolytic serinolysis, in which the side chain hydroxyl group of the serine supplies its oxygen atom to form the C-terminus of the beta chain, while the remainder of the serine residue undergoes an oxidative deamination to produce ammonia and the pyruvoyl group blocking the N-terminus of the alpha chain.

It catalyses the reaction S-adenosyl-L-methionine + H(+) = S-adenosyl 3-(methylsulfanyl)propylamine + CO2. It participates in amine and polyamine biosynthesis; S-adenosylmethioninamine biosynthesis; S-adenosylmethioninamine from S-adenosyl-L-methionine: step 1/1. Functionally, catalyzes the decarboxylation of S-adenosylmethionine to S-adenosylmethioninamine (dcAdoMet), the propylamine donor required for the synthesis of the polyamines spermine and spermidine from the diamine putrescine. This is S-adenosylmethionine decarboxylase proenzyme 2 from Bacillus anthracis.